The primary structure comprises 100 residues: Urease subunit gamma (100 aa).

This sequence belongs to the urease gamma subunit family. As to quaternary structure, heterotrimer of UreA (gamma), UreB (beta) and UreC (alpha) subunits. Three heterotrimers associate to form the active enzyme.

The protein resides in the cytoplasm. It carries out the reaction urea + 2 H2O + H(+) = hydrogencarbonate + 2 NH4(+). The protein operates within nitrogen metabolism; urea degradation; CO(2) and NH(3) from urea (urease route): step 1/1. The polypeptide is Urease subunit gamma (Teredinibacter turnerae (strain ATCC 39867 / T7901)).